Consider the following 31-residue polypeptide: Aspartate aminotransferase, cytoplasmic (31 aa).

This sequence belongs to the class-I pyridoxal-phosphate-dependent aminotransferase family. As to quaternary structure, homodimer. It depends on pyridoxal 5'-phosphate as a cofactor.

It localises to the cytoplasm. The enzyme catalyses L-aspartate + 2-oxoglutarate = oxaloacetate + L-glutamate. It catalyses the reaction L-cysteine + 2-oxoglutarate = 2-oxo-3-sulfanylpropanoate + L-glutamate. The catalysed reaction is (2S)-2-aminobutanoate + 2-oxoglutarate = 2-oxobutanoate + L-glutamate. It carries out the reaction 3-sulfino-L-alanine + 2-oxoglutarate = 3-sulfinopyruvate + L-glutamate. Functionally, biosynthesis of L-glutamate from L-aspartate or L-cysteine. Important regulator of levels of glutamate, the major excitatory neurotransmitter of the vertebrate central nervous system. Acts as a scavenger of glutamate in brain neuroprotection. The aspartate aminotransferase activity is involved in hepatic glucose synthesis during development and in adipocyte glyceroneogenesis. Using L-cysteine as substrate, regulates levels of mercaptopyruvate, an important source of hydrogen sulfide. Mercaptopyruvate is converted into H(2)S via the action of 3-mercaptopyruvate sulfurtransferase (3MST). Hydrogen sulfide is an important synaptic modulator and neuroprotectant in the brain. The sequence is that of Aspartate aminotransferase, cytoplasmic from Oryctolagus cuniculus (Rabbit).